The following is a 492-amino-acid chain: Glycerol kinase 1 (492 aa).

Thr-10 serves as a coordination point for ADP. Thr-10 and Ser-11 together coordinate ATP. Residue Thr-10 participates in sn-glycerol 3-phosphate binding. Lys-14 is an ADP binding site. Sn-glycerol 3-phosphate is bound by residues Arg-80, Glu-81, Tyr-132, and Asp-241. Glycerol-binding residues include Arg-80, Glu-81, Tyr-132, and Asp-241. Residues Thr-263, Gly-306, Gly-407, and Asn-411 each contribute to the ADP site. ATP is bound by residues Thr-263, Gly-306, and Gly-407.

Belongs to the FGGY kinase family.

It carries out the reaction glycerol + ATP = sn-glycerol 3-phosphate + ADP + H(+). The protein operates within polyol metabolism; glycerol degradation via glycerol kinase pathway; sn-glycerol 3-phosphate from glycerol: step 1/1. Its activity is regulated as follows. Inhibited by fructose 1,6-bisphosphate (FBP). Its function is as follows. Key enzyme in the regulation of glycerol uptake and metabolism. Catalyzes the phosphorylation of glycerol to yield sn-glycerol 3-phosphate. The chain is Glycerol kinase 1 from Thermotoga maritima (strain ATCC 43589 / DSM 3109 / JCM 10099 / NBRC 100826 / MSB8).